Reading from the N-terminus, the 451-residue chain is tRNA modification GTPase MnmE (451 aa).

(6S)-5-formyl-5,6,7,8-tetrahydrofolate contacts are provided by Arg-37, Glu-95, and Lys-135. The region spanning 232-376 is the TrmE-type G domain; sequence GLSIVIMGPP…LVEAIADFAG (145 aa). A K(+)-binding site is contributed by Asn-242. GTP-binding positions include 242 to 247, 261 to 267, and 286 to 289; these read NAGKST, SEIAGTT, and DTAG. Position 246 (Ser-246) interacts with Mg(2+). Positions 261, 263, and 266 each coordinate K(+). Position 267 (Thr-267) interacts with Mg(2+). (6S)-5-formyl-5,6,7,8-tetrahydrofolate is bound at residue Lys-451.

This sequence belongs to the TRAFAC class TrmE-Era-EngA-EngB-Septin-like GTPase superfamily. TrmE GTPase family. Homodimer. Heterotetramer of two MnmE and two MnmG subunits. Requires K(+) as cofactor.

It is found in the cytoplasm. In terms of biological role, exhibits a very high intrinsic GTPase hydrolysis rate. Involved in the addition of a carboxymethylaminomethyl (cmnm) group at the wobble position (U34) of certain tRNAs, forming tRNA-cmnm(5)s(2)U34. The chain is tRNA modification GTPase MnmE from Beijerinckia indica subsp. indica (strain ATCC 9039 / DSM 1715 / NCIMB 8712).